A 291-amino-acid chain; its full sequence is Bifunctional protein FolD (291 aa).

NADP(+) is bound by residues 167 to 169 (GRS), S192, and I233.

This sequence belongs to the tetrahydrofolate dehydrogenase/cyclohydrolase family. In terms of assembly, homodimer.

The enzyme catalyses (6R)-5,10-methylene-5,6,7,8-tetrahydrofolate + NADP(+) = (6R)-5,10-methenyltetrahydrofolate + NADPH. It carries out the reaction (6R)-5,10-methenyltetrahydrofolate + H2O = (6R)-10-formyltetrahydrofolate + H(+). It functions in the pathway one-carbon metabolism; tetrahydrofolate interconversion. Catalyzes the oxidation of 5,10-methylenetetrahydrofolate to 5,10-methenyltetrahydrofolate and then the hydrolysis of 5,10-methenyltetrahydrofolate to 10-formyltetrahydrofolate. The polypeptide is Bifunctional protein FolD (Dichelobacter nodosus (strain VCS1703A)).